The following is a 125-amino-acid chain: Small ribosomal subunit protein uS13 (125 aa).

Residues 94–125 (SLPVRGQRTRTNARTRKGKRKTVAGKKKAVKK) form a disordered region.

It belongs to the universal ribosomal protein uS13 family. Part of the 30S ribosomal subunit. Forms a loose heterodimer with protein S19. Forms two bridges to the 50S subunit in the 70S ribosome.

Located at the top of the head of the 30S subunit, it contacts several helices of the 16S rRNA. In the 70S ribosome it contacts the 23S rRNA (bridge B1a) and protein L5 of the 50S subunit (bridge B1b), connecting the 2 subunits; these bridges are implicated in subunit movement. Contacts the tRNAs in the A and P-sites. This Chlorobium chlorochromatii (strain CaD3) protein is Small ribosomal subunit protein uS13.